The sequence spans 300 residues: Protoheme IX farnesyltransferase (300 aa).

The next 9 membrane-spanning stretches (helical) occupy residues Gly24 to Phe44, Leu46 to Ser66, Ala99 to Pro119, Ala122 to Val142, Leu145 to Ala165, Leu176 to Phe196, Ile220 to Gly240, Leu244 to Ile264, and Ala275 to Leu295.

It belongs to the UbiA prenyltransferase family. Protoheme IX farnesyltransferase subfamily.

The protein localises to the cell inner membrane. The enzyme catalyses heme b + (2E,6E)-farnesyl diphosphate + H2O = Fe(II)-heme o + diphosphate. Its pathway is porphyrin-containing compound metabolism; heme O biosynthesis; heme O from protoheme: step 1/1. Functionally, converts heme B (protoheme IX) to heme O by substitution of the vinyl group on carbon 2 of heme B porphyrin ring with a hydroxyethyl farnesyl side group. The sequence is that of Protoheme IX farnesyltransferase from Flavobacterium psychrophilum (strain ATCC 49511 / DSM 21280 / CIP 103535 / JIP02/86).